The chain runs to 369 residues: Glycine oxidase (369 aa).

FAD-binding positions include 14-15 (II), 34-35 (ES), 42-43 (TT), 47-49 (AGM), and V174. Residues R302 and R329 each coordinate substrate. Residue 327–333 (HFRNGIL) coordinates FAD.

The protein belongs to the DAO family. ThiO subfamily. In terms of assembly, homotetramer. FAD serves as cofactor.

The protein resides in the cytoplasm. It catalyses the reaction glycine + O2 + H2O = glyoxylate + H2O2 + NH4(+). The enzyme catalyses N-ethylglycine + O2 + H2O = ethylamine + glyoxylate + H2O2. The catalysed reaction is sarcosine + O2 + H2O = methylamine + glyoxylate + H2O2. It carries out the reaction D-alanine + O2 + H2O = pyruvate + H2O2 + NH4(+). It catalyses the reaction glyphosate + O2 + H2O = aminomethylphosphonate + glyoxylate + H2O2 + H(+). Its pathway is cofactor biosynthesis; thiamine diphosphate biosynthesis. With respect to regulation, is competitively inhibited by glycolate. Functionally, catalyzes the FAD-dependent oxidative deamination of various amines and D-amino acids to yield the corresponding alpha-keto acids, ammonia/amine, and hydrogen peroxide. Oxidizes sarcosine (N-methylglycine), N-ethylglycine and glycine. Can also oxidize the herbicide glyphosate (N-phosphonomethylglycine). Displays lower activities on D-alanine, D-valine, D-proline and D-methionine. Does not act on L-amino acids and other D-amino acids. Is essential for thiamine biosynthesis since the oxidation of glycine catalyzed by ThiO generates the glycine imine intermediate (dehydroglycine) required for the biosynthesis of the thiazole ring of thiamine pyrophosphate. The polypeptide is Glycine oxidase (Bacillus subtilis (strain 168)).